Here is a 77-residue protein sequence, read N- to C-terminus: DNA-directed RNA polymerase subunit epsilon (77 aa).

Belongs to the RNA polymerase subunit epsilon family. As to quaternary structure, RNAP is composed of a core of 2 alpha, a beta and a beta' subunit. The core is associated with a delta subunit, and at least one of epsilon or omega. When a sigma factor is associated with the core the holoenzyme is formed, which can initiate transcription.

It catalyses the reaction RNA(n) + a ribonucleoside 5'-triphosphate = RNA(n+1) + diphosphate. Its function is as follows. A non-essential component of RNA polymerase (RNAP). This Lactobacillus delbrueckii subsp. bulgaricus (strain ATCC 11842 / DSM 20081 / BCRC 10696 / JCM 1002 / NBRC 13953 / NCIMB 11778 / NCTC 12712 / WDCM 00102 / Lb 14) protein is DNA-directed RNA polymerase subunit epsilon.